The sequence spans 370 residues: Platelet-derived growth factor D (370 aa).

An N-terminal signal peptide occupies residues 1–18; sequence MHRLIFVCTLVCANFCSC. The 119-residue stretch at 52–170 folds into the CUB domain; sequence RDETIQVRGN…PGFKIYYSLL (119 aa). C109 and C131 are oxidised to a cystine. Residue N276 is glycosylated (N-linked (GlcNAc...) asparagine). 2 disulfide bridges follow: C302/C360 and C306/C362.

Belongs to the PDGF/VEGF growth factor family. Homodimer; disulfide-linked. Interacts with PDGFRB homodimers, and with heterodimers formed by PDGFRA and PDGFRB. Post-translationally, activated by proteolytic cleavage. Proteolytic removal of the N-terminal CUB domain releasing the core domain is necessary for unmasking the receptor-binding epitopes of the core domain. Cleavage after Arg-247 or Arg-249 by urokinase plasminogen activator gives rise to the active form.

It localises to the secreted. Its function is as follows. Growth factor that plays an essential role in the regulation of embryonic development, cell proliferation, cell migration, survival and chemotaxis. Potent mitogen for cells of mesenchymal origin. Plays an important role in wound healing. Induces macrophage recruitment, increased interstitial pressure, and blood vessel maturation during angiogenesis. Can initiate events that lead to a mesangial proliferative glomerulonephritis, including influx of monocytes and macrophages and production of extracellular matrix. The chain is Platelet-derived growth factor D (PDGFD) from Pongo abelii (Sumatran orangutan).